The sequence spans 541 residues: Zingiberene synthase (541 aa).

Residues Asp295, Asp299, Asn439, Ser443, and Glu447 each contribute to the Mg(2+) site. The DDXXD motif motif lies at 295-299; it reads DDIID.

It belongs to the terpene synthase family. It depends on Mg(2+) as a cofactor. Mn(2+) is required as a cofactor.

It is found in the cytoplasm. The enzyme catalyses (2E,6E)-farnesyl diphosphate = alpha-zingiberene + diphosphate. The protein operates within secondary metabolite biosynthesis; terpenoid biosynthesis. Sesquiterpene synthase converting farnesyl diphosphate into two major products, zingiberene &gt; beta-sesquiphellandrene, and five minor products, 7-epi-sesquithujene, sesquisabinene A, (E)-alpha-bergamotene, (E)-beta-farnesene and beta-bisabolene. Can also accept geranyl diphosphate as substrate, producing nine monoterpenes, with myrcene, limonene and alpha-terpinolene as the major products. The chain is Zingiberene synthase (TPS1) from Sorghum bicolor (Sorghum).